Reading from the N-terminus, the 363-residue chain is Pyrimidine monooxygenase RutA (363 aa).

Residues 49 to 50, Asn115, Glu124, 140 to 141, and Ser190 contribute to the FMN site; these read IK and RY.

Belongs to the NtaA/SnaA/DszA monooxygenase family. RutA subfamily.

It catalyses the reaction uracil + FMNH2 + NADH + O2 = (Z)-3-ureidoacrylate + FMN + NAD(+) + H2O + H(+). The enzyme catalyses thymine + FMNH2 + NADH + O2 = (Z)-2-methylureidoacrylate + FMN + NAD(+) + H2O + H(+). Functionally, catalyzes the pyrimidine ring opening between N-3 and C-4 by an unusual flavin hydroperoxide-catalyzed mechanism, adding oxygen atoms in the process to yield ureidoacrylate peracid, that immediately reacts with FMN forming ureidoacrylate and FMN-N(5)-oxide. The FMN-N(5)-oxide reacts spontaneously with NADH to produce FMN. Requires the flavin reductase RutF to regenerate FMN in vivo. This chain is Pyrimidine monooxygenase RutA, found in Enterobacter sp. (strain 638).